Consider the following 662-residue polypeptide: Protein translocase subunit SecA 2 (662 aa).

Residues Q110, G128–T132, and D538 contribute to the ATP site.

This sequence belongs to the SecA family. Monomer and homodimer. Part of the essential Sec protein translocation apparatus which comprises SecA, SecYEG and auxiliary proteins SecDF. Other proteins may also be involved.

It localises to the cell inner membrane. It is found in the cytoplasm. The catalysed reaction is ATP + H2O + cellular proteinSide 1 = ADP + phosphate + cellular proteinSide 2.. In terms of biological role, part of the Sec protein translocase complex. Interacts with the SecYEG preprotein conducting channel. Has a central role in coupling the hydrolysis of ATP to the transfer of proteins into and across the cell membrane, serving as an ATP-driven molecular motor driving the stepwise translocation of polypeptide chains across the membrane. The protein is Protein translocase subunit SecA 2 of Chlorobium chlorochromatii (strain CaD3).